The following is a 487-amino-acid chain: Putative B3 domain-containing protein At1g78640 (487 aa).

DNA-binding regions (TF-B3) lie at residues 171 to 269 and 379 to 474; these read RLLL…QQGT and RLTL…LFRV.

It localises to the nucleus. The protein is Putative B3 domain-containing protein At1g78640 of Arabidopsis thaliana (Mouse-ear cress).